Here is a 339-residue protein sequence, read N- to C-terminus: MTIAIRSVEKQFGRYPALNKVDLEIADGELLALLGPSGSGKTTLLRTIAGLEFPDAGQVLFDGQDVTYASAAARRVGFVFQQYALFKHMTVAKNIAFGLDVRKGKDKPSKAEIARRVEELLKLVELEGLGGRYPSQLSGGQRQRVALSRALAVQPSVLLLDEPFGALDATVRKSLRRELRRVHDATGVTTIFVTHDQEEALELADRVAILNNGRIEQIGTPDQVHDAPETAFVCGFVGEANRFDGQVSGGRFKAGALTVPASALKDGAATAYVRPHDFALDEAGFEVLIERAQVQGALTAVTALTSDGRRLEISASRADADRFTGAVKIVARKAHVYAA.

Residues 3-237 form the ABC transporter domain; the sequence is IAIRSVEKQF…PETAFVCGFV (235 aa). 35-42 is a binding site for ATP; that stretch reads GPSGSGKT.

Belongs to the ABC transporter superfamily. Sulfate/tungstate importer (TC 3.A.1.6) family. The complex is composed of two ATP-binding proteins (CysA), two transmembrane proteins (CysT and CysW) and a solute-binding protein (CysP).

The protein resides in the cell inner membrane. The catalysed reaction is sulfate(out) + ATP + H2O = sulfate(in) + ADP + phosphate + H(+). It carries out the reaction thiosulfate(out) + ATP + H2O = thiosulfate(in) + ADP + phosphate + H(+). In terms of biological role, part of the ABC transporter complex CysAWTP involved in sulfate/thiosulfate import. Responsible for energy coupling to the transport system. In Caulobacter vibrioides (strain ATCC 19089 / CIP 103742 / CB 15) (Caulobacter crescentus), this protein is Sulfate/thiosulfate import ATP-binding protein CysA.